A 343-amino-acid chain; its full sequence is Putative mediator of RNA polymerase II transcription subunit 4 (343 aa).

Positions 86 to 125 (LKKLEKHQKIQKEITEIQKEIEEKDKLISTLALNLKDIES) form a coiled coil. Positions 247-343 (ISSPFSIGGN…DEESEEVEWD (97 aa)) are disordered. Low complexity predominate over residues 271 to 316 (QQQQQQQQQPQQQLSQSQQSQQQTESELQPIQSILQPPQQLNIDLD). Acidic residues predominate over residues 317 to 343 (LNPDLDSSGDDDDEDDDDEESEEVEWD).

The protein belongs to the Mediator complex subunit 4 family. As to quaternary structure, component of the Mediator complex.

It localises to the nucleus. Its function is as follows. Component of the Mediator complex, a coactivator involved in the regulated transcription of nearly all RNA polymerase II-dependent genes. Mediator functions as a bridge to convey information from gene-specific regulatory proteins to the basal RNA polymerase II transcription machinery. Mediator is recruited to promoters by direct interactions with regulatory proteins and serves as a scaffold for the assembly of a functional preinitiation complex with RNA polymerase II and the general transcription factors. This Dictyostelium discoideum (Social amoeba) protein is Putative mediator of RNA polymerase II transcription subunit 4 (med4).